Here is an 86-residue protein sequence, read N- to C-terminus: Large ribosomal subunit protein bL27 (86 aa).

Positions Met-1 to Gly-22 are disordered.

This sequence belongs to the bacterial ribosomal protein bL27 family.

This Rickettsia rickettsii (strain Iowa) protein is Large ribosomal subunit protein bL27.